A 440-amino-acid polypeptide reads, in one-letter code: 3-phosphoshikimate 1-carboxyvinyltransferase (440 aa).

3-phosphoshikimate contacts are provided by K31, S32, and R36. K31 provides a ligand contact to phosphoenolpyruvate. 2 residues coordinate phosphoenolpyruvate: G104 and R133. Positions 178, 180, 328, and 355 each coordinate 3-phosphoshikimate. Q180 is a phosphoenolpyruvate binding site. D328 functions as the Proton acceptor in the catalytic mechanism. Phosphoenolpyruvate is bound by residues R359 and R401.

This sequence belongs to the EPSP synthase family. As to quaternary structure, monomer.

It is found in the cytoplasm. It catalyses the reaction 3-phosphoshikimate + phosphoenolpyruvate = 5-O-(1-carboxyvinyl)-3-phosphoshikimate + phosphate. It functions in the pathway metabolic intermediate biosynthesis; chorismate biosynthesis; chorismate from D-erythrose 4-phosphate and phosphoenolpyruvate: step 6/7. Functionally, catalyzes the transfer of the enolpyruvyl moiety of phosphoenolpyruvate (PEP) to the 5-hydroxyl of shikimate-3-phosphate (S3P) to produce enolpyruvyl shikimate-3-phosphate and inorganic phosphate. The chain is 3-phosphoshikimate 1-carboxyvinyltransferase from Thermosynechococcus vestitus (strain NIES-2133 / IAM M-273 / BP-1).